A 219-amino-acid polypeptide reads, in one-letter code: Ribose-5-phosphate isomerase A (219 aa).

Substrate contacts are provided by residues 28–31 (TGST), 81–84 (DGAD), and 94–97 (KGGG). The Proton acceptor role is filled by Glu-103. Lys-121 contacts substrate.

The protein belongs to the ribose 5-phosphate isomerase family. In terms of assembly, homodimer.

It catalyses the reaction aldehydo-D-ribose 5-phosphate = D-ribulose 5-phosphate. It functions in the pathway carbohydrate degradation; pentose phosphate pathway; D-ribose 5-phosphate from D-ribulose 5-phosphate (non-oxidative stage): step 1/1. Functionally, catalyzes the reversible conversion of ribose-5-phosphate to ribulose 5-phosphate. The chain is Ribose-5-phosphate isomerase A from Shigella boydii serotype 18 (strain CDC 3083-94 / BS512).